The following is a 225-amino-acid chain: Protein GrpE (225 aa).

2 disordered regions span residues 1–44 (MTEE…ENAG) and 183–225 (VAVA…PDEG).

It belongs to the GrpE family. As to quaternary structure, homodimer.

The protein localises to the cytoplasm. Participates actively in the response to hyperosmotic and heat shock by preventing the aggregation of stress-denatured proteins, in association with DnaK and GrpE. It is the nucleotide exchange factor for DnaK and may function as a thermosensor. Unfolded proteins bind initially to DnaJ; upon interaction with the DnaJ-bound protein, DnaK hydrolyzes its bound ATP, resulting in the formation of a stable complex. GrpE releases ADP from DnaK; ATP binding to DnaK triggers the release of the substrate protein, thus completing the reaction cycle. Several rounds of ATP-dependent interactions between DnaJ, DnaK and GrpE are required for fully efficient folding. The protein is Protein GrpE of Streptomyces coelicolor (strain ATCC BAA-471 / A3(2) / M145).